A 117-amino-acid polypeptide reads, in one-letter code: 3',5'-cyclic-AMP phosphodiesterase 4A (117 aa).

The disordered stretch occupies residues 42-79; it reads KQNEVEIPSPTMKDREPQEAPRQRPCQQLPPPVPHLQP. The span at 53-63 shows a compositional bias: basic and acidic residues; that stretch reads MKDREPQEAPR. Residues 78–117 form a catalytic region; that stretch reads QPMSQITGVKRLSHNSGLNNASIPRFGVKTDQEELLAQEL.

The protein belongs to the cyclic nucleotide phosphodiesterase family. PDE4 subfamily. In terms of assembly, interacts with LYN (via SH3 domain). Interacts with ARRB2. Zn(2+) serves as cofactor. It depends on Mg(2+) as a cofactor. Mn(2+) is required as a cofactor. Proteolytically cleaved by CASP3.

It localises to the cytoplasm. The protein localises to the cytosol. It is found in the membrane. It catalyses the reaction 3',5'-cyclic AMP + H2O = AMP + H(+). Its pathway is purine metabolism; 3',5'-cyclic AMP degradation; AMP from 3',5'-cyclic AMP: step 1/1. Hydrolyzes the second messenger 3',5'-cyclic AMP (cAMP), which is a key regulator of many important physiological processes. This Cavia porcellus (Guinea pig) protein is 3',5'-cyclic-AMP phosphodiesterase 4A (PDE4A).